Here is a 275-residue protein sequence, read N- to C-terminus: NH(3)-dependent NAD(+) synthetase (275 aa).

50-57 is an ATP binding site; that stretch reads GISGGVDS. Residue Asp-56 participates in Mg(2+) binding. Residue Arg-147 participates in deamido-NAD(+) binding. Residue Thr-167 coordinates ATP. A Mg(2+)-binding site is contributed by Glu-172. Lys-180 and Asp-187 together coordinate deamido-NAD(+). Positions 196 and 218 each coordinate ATP. Residue 267–268 coordinates deamido-NAD(+); sequence HK.

Belongs to the NAD synthetase family. In terms of assembly, homodimer.

It carries out the reaction deamido-NAD(+) + NH4(+) + ATP = AMP + diphosphate + NAD(+) + H(+). The protein operates within cofactor biosynthesis; NAD(+) biosynthesis; NAD(+) from deamido-NAD(+) (ammonia route): step 1/1. In terms of biological role, catalyzes the ATP-dependent amidation of deamido-NAD to form NAD. Uses ammonia as a nitrogen source. The polypeptide is NH(3)-dependent NAD(+) synthetase (Pseudomonas putida (strain ATCC 700007 / DSM 6899 / JCM 31910 / BCRC 17059 / LMG 24140 / F1)).